The chain runs to 473 residues: MKSTVEKLSPTRVRINVEVPFTELEPDIDRAFKQLAKQIRLPGFRPGKAPRKLLEARVGRGAVLEQVVNDALPARYSEAVTAESLQPIGQPEIEVTKLEDNEELVFTAEVDVRPDIDLPDLGALKITVDPISVTDEDVDAEIEALQKRFGTLTGVDRAAEDGDFVSIDLSATVDGKDVPEANTEGLSHEVGSGQLIEGLDEAIIGLKADESKVFTTTLVAGEHAGQEAEVTVTVKSIKVRELPEVDDDFAQLASEFDTVEELRADLKEKISRFKRVQQAEAIRDKAIEVLLEQTEIPVPEAVVQAQVDDTLHNAIHGLDHDEDKFAESLKEQGSSREEFDADNRANAEKAIKTQLLMDSIADKLEIQVGQNDLTERLVLMSRQYGLEPQQLLQMLQQNNQLPAMFADVRRGLTVAAVVHGATVTDTDGAEIDTAEFFGPSGEQAEAEQDEAAPAEDATEETDADSDEAADDSK.

The PPIase FKBP-type domain maps to 162–243 (GDFVSIDLSA…VKSIKVRELP (82 aa)). The disordered stretch occupies residues 433 to 473 (TAEFFGPSGEQAEAEQDEAAPAEDATEETDADSDEAADDSK). Acidic residues predominate over residues 444–473 (AEAEQDEAAPAEDATEETDADSDEAADDSK).

It belongs to the FKBP-type PPIase family. Tig subfamily.

It localises to the cytoplasm. The enzyme catalyses [protein]-peptidylproline (omega=180) = [protein]-peptidylproline (omega=0). Involved in protein export. Acts as a chaperone by maintaining the newly synthesized protein in an open conformation. Functions as a peptidyl-prolyl cis-trans isomerase. This is Trigger factor from Mycolicibacterium vanbaalenii (strain DSM 7251 / JCM 13017 / BCRC 16820 / KCTC 9966 / NRRL B-24157 / PYR-1) (Mycobacterium vanbaalenii).